The chain runs to 182 residues: uncharacterized protein (182 aa).

Belongs to the mimivirus L6/L7/L57 family.

This is an uncharacterized protein from Acanthamoeba polyphaga mimivirus (APMV).